A 349-amino-acid chain; its full sequence is 3-dehydroquinate synthase (349 aa).

Residues 63–68 (DGEEYK), 97–101 (GVIGD), 121–122 (TT), Lys134, Lys143, and 161–164 (FLTT) each bind NAD(+). Glu176, His235, and His252 together coordinate Zn(2+).

The protein belongs to the sugar phosphate cyclases superfamily. Dehydroquinate synthase family. It depends on Co(2+) as a cofactor. Zn(2+) serves as cofactor. The cofactor is NAD(+).

It localises to the cytoplasm. The enzyme catalyses 7-phospho-2-dehydro-3-deoxy-D-arabino-heptonate = 3-dehydroquinate + phosphate. It functions in the pathway metabolic intermediate biosynthesis; chorismate biosynthesis; chorismate from D-erythrose 4-phosphate and phosphoenolpyruvate: step 2/7. Functionally, catalyzes the conversion of 3-deoxy-D-arabino-heptulosonate 7-phosphate (DAHP) to dehydroquinate (DHQ). The sequence is that of 3-dehydroquinate synthase from Sulfurimonas denitrificans (strain ATCC 33889 / DSM 1251) (Thiomicrospira denitrificans (strain ATCC 33889 / DSM 1251)).